The primary structure comprises 107 residues: Pyrimidine/purine nucleoside phosphorylase (107 aa).

It belongs to the nucleoside phosphorylase PpnP family.

The catalysed reaction is a purine D-ribonucleoside + phosphate = a purine nucleobase + alpha-D-ribose 1-phosphate. It carries out the reaction adenosine + phosphate = alpha-D-ribose 1-phosphate + adenine. It catalyses the reaction cytidine + phosphate = cytosine + alpha-D-ribose 1-phosphate. The enzyme catalyses guanosine + phosphate = alpha-D-ribose 1-phosphate + guanine. The catalysed reaction is inosine + phosphate = alpha-D-ribose 1-phosphate + hypoxanthine. It carries out the reaction thymidine + phosphate = 2-deoxy-alpha-D-ribose 1-phosphate + thymine. It catalyses the reaction uridine + phosphate = alpha-D-ribose 1-phosphate + uracil. The enzyme catalyses xanthosine + phosphate = alpha-D-ribose 1-phosphate + xanthine. Its function is as follows. Catalyzes the phosphorolysis of diverse nucleosides, yielding D-ribose 1-phosphate and the respective free bases. Can use uridine, adenosine, guanosine, cytidine, thymidine, inosine and xanthosine as substrates. Also catalyzes the reverse reactions. This is Pyrimidine/purine nucleoside phosphorylase from Azoarcus sp. (strain BH72).